The chain runs to 460 residues: MSNNYAIILAAGKGTRMKSDLPKVLHKVAGITMLEHVKRAVDAMEPAKTVTIVGHKAELVQAVLEGQSEFALQSEQLGTGHAVMMAEPALAGLEGQTLVIAGDTPLITGESLKNLINFHVSHKNVATILTAQADNPFGYGRIIRNADGEVQKIVEQKDANDFEKQVKEINTGTYLFDNKRLFEALKDINTDNAQGEYYLTDVISIFRQAGEKVGAYVLRDFDESLGVNDRVALATAEAVMRKRINEKHMVNGVTFINPDATYIDIDVEIGAEAVIEANVVLKGQTVIGERTVLTNGTRVRDAKIAADAVISNSDIEESVIEEGVTVGPYAHIRPGSLLKKDVHVGNFVEIKASTLGQGTKSGHLTYLGNATIGNNVNVGAGTITVNYDGKNKFKTTVGDNAFVGSNSTIIAPVTIGDNALLAAGSVITKDIPEDAIGIGRGRQENKEGYATRFPFHPSQK.

Residues 1 to 230 (MSNNYAIILA…FDESLGVNDR (230 aa)) are pyrophosphorylase. Residues 9-12 (LAAG), Lys-23, Gln-73, and 78-79 (GT) each bind UDP-N-acetyl-alpha-D-glucosamine. Residue Asp-103 participates in Mg(2+) binding. UDP-N-acetyl-alpha-D-glucosamine contacts are provided by Gly-140, Glu-155, Asn-170, and Asn-228. Residue Asn-228 participates in Mg(2+) binding. The segment at 231–251 (VALATAEAVMRKRINEKHMVN) is linker. Residues 252 to 460 (GVTFINPDAT…TRFPFHPSQK (209 aa)) are N-acetyltransferase. The UDP-N-acetyl-alpha-D-glucosamine site is built by Arg-333 and Lys-351. Catalysis depends on His-363, which acts as the Proton acceptor. UDP-N-acetyl-alpha-D-glucosamine-binding residues include Tyr-366 and Asn-377. Acetyl-CoA-binding positions include Ala-380, 386 to 387 (NY), Ser-405, Ala-423, and Arg-440.

It in the N-terminal section; belongs to the N-acetylglucosamine-1-phosphate uridyltransferase family. This sequence in the C-terminal section; belongs to the transferase hexapeptide repeat family. As to quaternary structure, homotrimer. Mg(2+) is required as a cofactor.

The protein localises to the cytoplasm. It carries out the reaction alpha-D-glucosamine 1-phosphate + acetyl-CoA = N-acetyl-alpha-D-glucosamine 1-phosphate + CoA + H(+). The catalysed reaction is N-acetyl-alpha-D-glucosamine 1-phosphate + UTP + H(+) = UDP-N-acetyl-alpha-D-glucosamine + diphosphate. It functions in the pathway nucleotide-sugar biosynthesis; UDP-N-acetyl-alpha-D-glucosamine biosynthesis; N-acetyl-alpha-D-glucosamine 1-phosphate from alpha-D-glucosamine 6-phosphate (route II): step 2/2. It participates in nucleotide-sugar biosynthesis; UDP-N-acetyl-alpha-D-glucosamine biosynthesis; UDP-N-acetyl-alpha-D-glucosamine from N-acetyl-alpha-D-glucosamine 1-phosphate: step 1/1. Its pathway is bacterial outer membrane biogenesis; LPS lipid A biosynthesis. Functionally, catalyzes the last two sequential reactions in the de novo biosynthetic pathway for UDP-N-acetylglucosamine (UDP-GlcNAc). The C-terminal domain catalyzes the transfer of acetyl group from acetyl coenzyme A to glucosamine-1-phosphate (GlcN-1-P) to produce N-acetylglucosamine-1-phosphate (GlcNAc-1-P), which is converted into UDP-GlcNAc by the transfer of uridine 5-monophosphate (from uridine 5-triphosphate), a reaction catalyzed by the N-terminal domain. This chain is Bifunctional protein GlmU, found in Streptococcus suis (strain 98HAH33).